A 2169-amino-acid chain; its full sequence is Vitellogenin-A1 (2169 aa).

Positions 1–46 are cleaved as a signal peptide; it reads MATDGITSRFGFNERRRTHNRNSCRILEDKMLAKLLLLALAGLTAA. Residues N107 and N125 are each glycosylated (N-linked (GlcNAc...) asparagine). Residues 116–1008 enclose the Vitellogenin domain; that stretch reads WMPNYEYVYN…SNDHRYPSGL (893 aa). Residues Y159 and Y163 each carry the sulfotyrosine modification. N-linked (GlcNAc...) asparagine glycans are attached at residues N360, N391, and N435. 2 disordered regions span residues 426 to 481 and 514 to 570; these read DKKN…DKVE and NDTS…SSSE. The span at 438-461 shows a compositional bias: low complexity; that stretch reads SSSSSSSSSSSSSSSESSSSSSES. N514 carries N-linked (GlcNAc...) asparagine glycosylation. The span at 517–531 shows a compositional bias: low complexity; the sequence is SSDSSSSDSSSSSSS. An N-linked (GlcNAc...) asparagine glycan is attached at N538. Low complexity predominate over residues 541–570; it reads SSYSSSSSSSSSSSSSESSSYSSSSSSSSE. N587, N763, and N781 each carry an N-linked (GlcNAc...) asparagine glycan. Residues Y1067, Y1070, and Y1074 each carry the sulfotyrosine modification. N-linked (GlcNAc...) asparagine glycosylation is found at N1140, N1233, and N1336. A sulfotyrosine mark is found at Y1563, Y1564, and Y1570. N-linked (GlcNAc...) asparagine glycans are attached at residues N1652 and N1696. Sulfotyrosine is present on residues Y1737, Y1806, Y1809, Y1822, Y1824, and Y1888. One can recognise a VWFD domain in the interval 1770–1979; that stretch reads PSCSFSNDYF…SYAITGQNCT (210 aa). Cystine bridges form between C1772–C1942 and C1794–C1978. N1977 is a glycosylation site (N-linked (GlcNAc...) asparagine). Positions 2026-2063 are enriched in low complexity; the sequence is EESSSSSSSSSSDSSSSSSSSESSSRSRSGSSSSSSSS. A disordered region spans residues 2026–2081; that stretch reads EESSSSSSSSSSDSSSSSSSSESSSRSRSGSSSSSSSSEEQKEFHPHKQEHSMKEC. A compositionally biased stretch (basic and acidic residues) spans 2064–2079; sequence EEQKEFHPHKQEHSMK.

In terms of processing, glycosylated, phosphorylated and sulfated. The large subunit is sulfated more extensively than the small one. Produced by the fat body, where it is cleaved in the rough endoplasmic reticulum or cis-Golgi before being secreted into hemolymph. It is then sequestered by a single class of receptor mediated endocytosis in the ovary.

Precursor of the egg-yolk proteins that are sources of nutrients during embryonic development. May supply aromatic amino acids to the cuticle of rapidly developing embryos. This chain is Vitellogenin-A1 (VGA1), found in Aedes aegypti (Yellowfever mosquito).